The chain runs to 222 residues: uncharacterized protein (222 aa).

An N-terminal signal peptide occupies residues Met-1–Gly-20. The N-palmitoyl cysteine moiety is linked to residue Cys-21. Cys-21 carries S-diacylglycerol cysteine lipidation.

The protein localises to the cell membrane. This is an uncharacterized protein from Escherichia coli O157:H7.